We begin with the raw amino-acid sequence, 459 residues long: tRNA modification GTPase MnmE (459 aa).

(6S)-5-formyl-5,6,7,8-tetrahydrofolate is bound by residues R22, E85, and R124. The 160-residue stretch at 221-380 (GLSTVIVGKP…LEIQIRDLFF (160 aa)) folds into the TrmE-type G domain. N231 provides a ligand contact to K(+). GTP contacts are provided by residues 231–236 (NVGKSS), 250–256 (TEVAGTT), and 275–278 (DTAG). S235 serves as a coordination point for Mg(2+). T250, V252, and T255 together coordinate K(+). Position 256 (T256) interacts with Mg(2+). K459 serves as a coordination point for (6S)-5-formyl-5,6,7,8-tetrahydrofolate.

The protein belongs to the TRAFAC class TrmE-Era-EngA-EngB-Septin-like GTPase superfamily. TrmE GTPase family. Homodimer. Heterotetramer of two MnmE and two MnmG subunits. It depends on K(+) as a cofactor.

It is found in the cytoplasm. Exhibits a very high intrinsic GTPase hydrolysis rate. Involved in the addition of a carboxymethylaminomethyl (cmnm) group at the wobble position (U34) of certain tRNAs, forming tRNA-cmnm(5)s(2)U34. The sequence is that of tRNA modification GTPase MnmE from Staphylococcus aureus (strain Mu3 / ATCC 700698).